Reading from the N-terminus, the 339-residue chain is Undecaprenyl-phosphate 4-deoxy-4-formamido-L-arabinose transferase (339 aa).

Transmembrane regions (helical) follow at residues 235–255 (LSLV…FLLV) and 269–289 (LFVL…GMGL).

Belongs to the glycosyltransferase 2 family.

The protein localises to the cell inner membrane. It catalyses the reaction UDP-4-deoxy-4-formamido-beta-L-arabinose + di-trans,octa-cis-undecaprenyl phosphate = 4-deoxy-4-formamido-alpha-L-arabinopyranosyl di-trans,octa-cis-undecaprenyl phosphate + UDP. Its pathway is glycolipid biosynthesis; 4-amino-4-deoxy-alpha-L-arabinose undecaprenyl phosphate biosynthesis; 4-amino-4-deoxy-alpha-L-arabinose undecaprenyl phosphate from UDP-4-deoxy-4-formamido-beta-L-arabinose and undecaprenyl phosphate: step 1/2. The protein operates within bacterial outer membrane biogenesis; lipopolysaccharide biosynthesis. Catalyzes the transfer of 4-deoxy-4-formamido-L-arabinose from UDP to undecaprenyl phosphate. The modified arabinose is attached to lipid A and is required for resistance to polymyxin and cationic antimicrobial peptides. In Pseudomonas paraeruginosa (strain DSM 24068 / PA7) (Pseudomonas aeruginosa (strain PA7)), this protein is Undecaprenyl-phosphate 4-deoxy-4-formamido-L-arabinose transferase.